The primary structure comprises 378 residues: Homoserine O-acetyltransferase (378 aa).

Positions asparagine 52 to leucine 337 constitute an AB hydrolase-1 domain. The active-site Nucleophile is serine 148. Substrate is bound at residue arginine 217. Active-site residues include aspartate 304 and histidine 333. Aspartate 334 is a binding site for substrate.

This sequence belongs to the AB hydrolase superfamily. MetX family. In terms of assembly, homodimer.

It is found in the cytoplasm. It catalyses the reaction L-homoserine + acetyl-CoA = O-acetyl-L-homoserine + CoA. It participates in amino-acid biosynthesis; L-methionine biosynthesis via de novo pathway; O-acetyl-L-homoserine from L-homoserine: step 1/1. Transfers an acetyl group from acetyl-CoA to L-homoserine, forming acetyl-L-homoserine. The protein is Homoserine O-acetyltransferase of Chloroherpeton thalassium (strain ATCC 35110 / GB-78).